A 113-amino-acid chain; its full sequence is U11-theraphotoxin-Hhn1a (113 aa).

Residues 1 to 21 (MNTVRVTFLLVFVLAVSLGQA) form the signal peptide. A propeptide spanning residues 22 to 74 (DKDENRMEMQEKTEQGRSYLDFAENLLLQKLEELEAKLLEEDSEESRNSRQKR) is cleaved from the precursor. The tract at residues 61 to 83 (EEDSEESRNSRQKRCIGEGVPCD) is disordered. Cystine bridges form between Cys75–Cys90, Cys82–Cys95, and Cys89–Cys110.

It belongs to the neurotoxin 14 (magi-1) family. 01 (HNTX-16) subfamily. Expressed by the venom gland.

Its subcellular location is the secreted. Its function is as follows. Probable ion channel inhibitor. This is U11-theraphotoxin-Hhn1a from Cyriopagopus hainanus (Chinese bird spider).